The sequence spans 205 residues: CASP-like protein 3A1 (205 aa).

At Met1 to Asp39 the chain is on the cytoplasmic side. A helical membrane pass occupies residues Leu40–Met60. Residues Ala61–Glu89 are Extracellular-facing. The chain crosses the membrane as a helical span at residues Phe90–Gly110. The Cytoplasmic portion of the chain corresponds to Met111–His125. A helical transmembrane segment spans residues Ala126 to Ala146. The Extracellular segment spans residues Ala147–Lys176. A glycan (N-linked (GlcNAc...) asparagine) is linked at Asn154. A helical membrane pass occupies residues Ala177 to Leu197. The Cytoplasmic segment spans residues Asp198 to Asn205.

Belongs to the Casparian strip membrane proteins (CASP) family. As to quaternary structure, homodimer and heterodimers.

The protein resides in the cell membrane. The polypeptide is CASP-like protein 3A1 (Picea sitchensis (Sitka spruce)).